A 122-amino-acid polypeptide reads, in one-letter code: Holo-[acyl-carrier-protein] synthase (122 aa).

The Mg(2+) site is built by Asp8 and Glu56.

This sequence belongs to the P-Pant transferase superfamily. AcpS family. Mg(2+) is required as a cofactor.

It localises to the cytoplasm. It carries out the reaction apo-[ACP] + CoA = holo-[ACP] + adenosine 3',5'-bisphosphate + H(+). Its function is as follows. Transfers the 4'-phosphopantetheine moiety from coenzyme A to a Ser of acyl-carrier-protein. The sequence is that of Holo-[acyl-carrier-protein] synthase from Alkaliphilus oremlandii (strain OhILAs) (Clostridium oremlandii (strain OhILAs)).